A 1064-amino-acid chain; its full sequence is MPKRNDIKKIMIIGSGPIIIGQAAEFDYAGTQACLALKEEGYEVVLVNSNPATIMTDREIADTVYIEPITLEFVSKILRKERPDALLPTLGGQTGLNMAMELSKTGILEELNVELLGTKLSAIDQAEDRELFKELCESINEPLCASDIATTVEEAINIADKIGYPIIVRPAFTMGGTGGGICDTEEELREIVANGLKLSPVTQCLIEESIAGYKEIEYEVMRDSADNAIVVCNMENFDPVGVHTGDSIVFAPSQTLSDNEYQMLRDASLNIIHALKIEGGCNVQLALDPNSYEYRVIEVNPRVSRSSALASKATGYPIAKMSAKIAIGMTLDEIINPVTNKTYAMFEPALDYVVAKIARFPFDKFENGDRHLGTQMKATGEVMAIGRNIEESLLKAVRSLEIGVFHNEMTEAIEADDEKLYEKMVKTQDDRLFYVSEAIRCGIPIEEIADLTKIDIFFLDKLLHIVEIENQLKVNIFEPELLKTAKKNGFSDREIAKLWNVTPEEVRRRRQENKIIPVYKMVDTCAAEFESSTPYFYSTYEWENESKRSDKEKIIVLGSGPIRIGQGVEFDYATVHCVKAIQALGKEAIVINSNPETVSTDFSISDKLYFEPLTFEDVMNVIDLEEPLGVIVQFGGQTAINLAEPLSKAGVKILGTQVEDLDRAEDRDLFEKALQDLDIPQPPGATATNEEEAVANANKIGYPVLIRPSFVLGGRAMEIINNEKDLRDYMNRAVKASPEHPVLVDSYLQGQECEVDAICDGKEVLLPGIMEHIERAGVHSGDSMAVYPPQNLSQAIIDTIVDYTKRLAIGLNCIGMMNIQFVIYEEQVYVIEVNPRASRTVPFLSKVTNIPMAQLATQMILGENLKDLGYEAGLAPTPDMVHVKAPVFSFTKLAKVDSLLGPEMKSTGEAMGSDVTLEKALYKSFEAAKLHMADYGSVLFTVADEDKEETLAFAKDFAEIGYSLVATAGTAAFLKENGLYVREVEKLAGGEDEEGTLVEDIRQGRVQAVVNTMGNTRASLTTATDGFRIRQEAISRGIPLFTSLDTVAAILKVMQSRSFTTKNI.

The carboxyphosphate synthetic domain stretch occupies residues 1–401; sequence MPKRNDIKKI…SLLKAVRSLE (401 aa). Positions 129, 169, 175, 176, 208, 210, 215, 241, 242, 243, 284, and 298 each coordinate ATP. One can recognise an ATP-grasp 1 domain in the interval 133–327; sequence KELCESINEP…IAKMSAKIAI (195 aa). Positions 284, 298, and 300 each coordinate Mg(2+). Q284, E298, and N300 together coordinate Mn(2+). Residues 402–546 form an oligomerization domain region; that stretch reads IGVFHNEMTE…YSTYEWENES (145 aa). Positions 547–929 are carbamoyl phosphate synthetic domain; the sequence is KRSDKEKIIV…ALYKSFEAAK (383 aa). In terms of domain architecture, ATP-grasp 2 spans 671–861; the sequence is EKALQDLDIP…MAQLATQMIL (191 aa). The ATP site is built by R707, S746, L748, E752, G777, V778, H779, S780, Q820, and E832. Mg(2+) contacts are provided by Q820, E832, and N834. 3 residues coordinate Mn(2+): Q820, E832, and N834. The MGS-like domain occupies 930–1064; the sequence is LHMADYGSVL…QSRSFTTKNI (135 aa). Residues 930–1064 form an allosteric domain region; sequence LHMADYGSVL…QSRSFTTKNI (135 aa).

The protein belongs to the CarB family. As to quaternary structure, composed of two chains; the small (or glutamine) chain promotes the hydrolysis of glutamine to ammonia, which is used by the large (or ammonia) chain to synthesize carbamoyl phosphate. Tetramer of heterodimers (alpha,beta)4. It depends on Mg(2+) as a cofactor. Mn(2+) is required as a cofactor.

It catalyses the reaction hydrogencarbonate + L-glutamine + 2 ATP + H2O = carbamoyl phosphate + L-glutamate + 2 ADP + phosphate + 2 H(+). It carries out the reaction hydrogencarbonate + NH4(+) + 2 ATP = carbamoyl phosphate + 2 ADP + phosphate + 2 H(+). It participates in amino-acid biosynthesis; L-arginine biosynthesis; carbamoyl phosphate from bicarbonate: step 1/1. It functions in the pathway pyrimidine metabolism; UMP biosynthesis via de novo pathway; (S)-dihydroorotate from bicarbonate: step 1/3. Its function is as follows. Large subunit of the glutamine-dependent carbamoyl phosphate synthetase (CPSase). CPSase catalyzes the formation of carbamoyl phosphate from the ammonia moiety of glutamine, carbonate, and phosphate donated by ATP, constituting the first step of 2 biosynthetic pathways, one leading to arginine and/or urea and the other to pyrimidine nucleotides. The large subunit (synthetase) binds the substrates ammonia (free or transferred from glutamine from the small subunit), hydrogencarbonate and ATP and carries out an ATP-coupled ligase reaction, activating hydrogencarbonate by forming carboxy phosphate which reacts with ammonia to form carbamoyl phosphate. The chain is Carbamoyl phosphate synthase large chain from Lactococcus lactis subsp. cremoris (strain SK11).